The chain runs to 390 residues: Magnesium-protoporphyrin IX monomethyl ester [oxidative] cyclase (390 aa).

It belongs to the AcsF family. Fe cation is required as a cofactor.

It carries out the reaction Mg-protoporphyrin IX 13-monomethyl ester + 3 NADPH + 3 O2 + 2 H(+) = 3,8-divinyl protochlorophyllide a + 3 NADP(+) + 5 H2O. The protein operates within porphyrin-containing compound metabolism; chlorophyll biosynthesis (light-independent). Functionally, catalyzes the formation of the isocyclic ring in chlorophyll biosynthesis. Mediates the cyclase reaction, which results in the formation of divinylprotochlorophyllide (Pchlide) characteristic of all chlorophylls from magnesium-protoporphyrin IX 13-monomethyl ester (MgPMME). This Prochlorococcus marinus (strain AS9601) protein is Magnesium-protoporphyrin IX monomethyl ester [oxidative] cyclase.